Here is a 179-residue protein sequence, read N- to C-terminus: MINKNKWLTVGLITSCHGINGQVKVKSLSDFEERFLKPGMRWLQKEDEPPSKIELISGFKQPGKQTFVIKLKDINSRNHAEQLKKFKILVKTNEIPKLKKEEFHLLELINLKVNTLENDKLNTIGKVINLENEKNNLLVIKLFKNQKEVFIPFVKEIVPIVDIKNNFIIINPPNGLLEL.

Residues 100–176 enclose the PRC barrel domain; that stretch reads KEEFHLLELI…FIIINPPNGL (77 aa).

It belongs to the RimM family. Binds ribosomal protein uS19.

It localises to the cytoplasm. An accessory protein needed during the final step in the assembly of 30S ribosomal subunit, possibly for assembly of the head region. Essential for efficient processing of 16S rRNA. May be needed both before and after RbfA during the maturation of 16S rRNA. It has affinity for free ribosomal 30S subunits but not for 70S ribosomes. The sequence is that of Ribosome maturation factor RimM from Prochlorococcus marinus (strain MIT 9215).